A 651-amino-acid chain; its full sequence is Kinesin-like protein KIF22-A (651 aa).

The 329-residue stretch at 31–359 folds into the Kinesin motor domain; that stretch reads RVRVAVRLRP…LNFAAKSKQI (329 aa). 116–123 serves as a coordination point for ATP; sequence GPTGAGKT. The segment at 366–413 is disordered; that stretch reads QETTQTVVQPAMKRPREETGHIAGSQKRKKSKNDSTESSPNSSMDTAG. Over residues 401-410 the composition is skewed to polar residues; sequence TESSPNSSMD. Residues 452-498 are a coiled coil; sequence KRERMALLKKWEESQMEIERLKEKQKELEQKAMEAEARLEKSNNSDL. The short motif at 561–564 is the Important for regulated proteolytic degradation element; that stretch reads GLEN.

Belongs to the TRAFAC class myosin-kinesin ATPase superfamily. Kinesin family. Ubiquitinated, leading to its subsequent proteasomal degradation.

The protein resides in the nucleus. Its subcellular location is the cytoplasm. It localises to the cytoskeleton. Kinesin family member that is involved in spindle formation and the movements of chromosomes during mitosis and meiosis. Binds to microtubules and to DNA. This Xenopus laevis (African clawed frog) protein is Kinesin-like protein KIF22-A (kif22-a).